The sequence spans 602 residues: Leucine-rich repeat-containing protein 40 (602 aa).

Serine 71 carries the phosphoserine modification. LRR repeat units lie at residues aspartate 83 to leucine 104, alanine 106 to leucine 127, asparagine 129 to leucine 150, asparagine 152 to leucine 173, asparagine 175 to leucine 196, serine 198 to methionine 219, arginine 221 to methionine 242, serine 244 to serine 265, leucine 266 to lysine 286, serine 290 to leucine 311, serine 313 to histidine 335, leucine 336 to lysine 356, threonine 400 to alanine 421, isoleucine 426 to leucine 447, methionine 450 to glutamine 472, lysine 473 to leucine 494, arginine 496 to isoleucine 517, threonine 519 to methionine 540, asparagine 543 to cysteine 564, and asparagine 566 to methionine 586.

The protein is Leucine-rich repeat-containing protein 40 (LRRC40) of Homo sapiens (Human).